Reading from the N-terminus, the 786-residue chain is DENN domain-containing protein 1C (786 aa).

The uDENN domain occupies 13 to 158 (FDWFFEAGCP…MDSSITVRSE (146 aa)). One can recognise a cDENN domain in the interval 182-318 (SLPSIPENRN…VVSLLRLRLR (137 aa)). Positions 320–398 (VALSPGEGVS…ESRLEKLNAG (79 aa)) constitute a dDENN domain. Residues 401–405 (FSDQF) carry the FXDXF motif motif. A disordered region spans residues 481–553 (KDGDSGLQRG…LSPGDTQNPW (73 aa)). A compositionally biased stretch (basic and acidic residues) spans 527–541 (LKTEEGPSEPLRERS). The segment covering 542 to 552 (PTLSPGDTQNP) has biased composition (polar residues). The residue at position 565 (S565) is a Phosphoserine. The Clathrin box motif lies at 570-579 (DLLSEILDSL). Disordered regions lie at residues 653–741 (YSKN…QPPQ) and 762–786 (SHVSTQQRPQDKQPRVADLKKCFEN). Low complexity predominate over residues 657–675 (SCSQPFQQSPPSQGDPGPS). Polar residues predominate over residues 706–740 (LLVSTEPNSDAVQRLQSISSPSCSHSAENPRNQPP). Over residues 770–786 (PQDKQPRVADLKKCFEN) the composition is skewed to basic and acidic residues.

In terms of assembly, exhibits low nucleotide-independent RAB35-binding activity. Interacts with clathrin heavy chain/CLTC and with AP2A2, but not with AP2B1.

Its subcellular location is the cytoplasm. The protein resides in the cytosol. It is found in the cytoplasmic vesicle. It localises to the clathrin-coated vesicle. In terms of biological role, guanine nucleotide exchange factor (GEF) which may activate RAB8A, RAB13 and RAB35. Promotes the exchange of GDP to GTP, converting inactive GDP-bound Rab proteins into their active GTP-bound form. This chain is DENN domain-containing protein 1C (Dennd1c), found in Mus musculus (Mouse).